The chain runs to 133 residues: Large ribosomal subunit protein uL15 (133 aa).

Residues 1–60 (MALENLKPAQGSTKDRKRVGRGQGSGMGKTSTRGGKGQTARTGYKAKRGFEGGQQPLQRR) are disordered.

The protein belongs to the universal ribosomal protein uL15 family. Part of the 50S ribosomal subunit.

Functionally, binds to the 23S rRNA. This is Large ribosomal subunit protein uL15 from Wolinella succinogenes (strain ATCC 29543 / DSM 1740 / CCUG 13145 / JCM 31913 / LMG 7466 / NCTC 11488 / FDC 602W) (Vibrio succinogenes).